The primary structure comprises 241 residues: Uridylate kinase (241 aa).

12-15 (KISG) contacts ATP. The tract at residues 20 to 25 (GDKGNG) is involved in allosteric activation by GTP. Position 54 (Gly-54) interacts with UMP. 2 residues coordinate ATP: Gly-55 and Arg-59. UMP-binding positions include Asp-74 and 135-142 (TGNPYFST). Positions 163, 169, and 172 each coordinate ATP.

It belongs to the UMP kinase family. In terms of assembly, homohexamer.

Its subcellular location is the cytoplasm. It catalyses the reaction UMP + ATP = UDP + ADP. It functions in the pathway pyrimidine metabolism; CTP biosynthesis via de novo pathway; UDP from UMP (UMPK route): step 1/1. Its activity is regulated as follows. Allosterically activated by GTP. Inhibited by UTP. Catalyzes the reversible phosphorylation of UMP to UDP. The chain is Uridylate kinase from Lactobacillus helveticus (strain DPC 4571).